A 62-amino-acid polypeptide reads, in one-letter code: Photosystem II reaction center protein Z (62 aa).

Helical transmembrane passes span 8 to 28 and 41 to 61; these read ALAA…VAYA and FLGS…NFLV.

It belongs to the PsbZ family. PSII is composed of 1 copy each of membrane proteins PsbA, PsbB, PsbC, PsbD, PsbE, PsbF, PsbH, PsbI, PsbJ, PsbK, PsbL, PsbM, PsbT, PsbX, PsbY, PsbZ, Psb30/Ycf12, peripheral proteins PsbO, CyanoQ (PsbQ), PsbU, PsbV and a large number of cofactors. It forms dimeric complexes.

It is found in the cellular thylakoid membrane. In terms of biological role, may control the interaction of photosystem II (PSII) cores with the light-harvesting antenna, regulates electron flow through the 2 photosystem reaction centers. PSII is a light-driven water plastoquinone oxidoreductase, using light energy to abstract electrons from H(2)O, generating a proton gradient subsequently used for ATP formation. The sequence is that of Photosystem II reaction center protein Z from Cyanothece sp. (strain PCC 7425 / ATCC 29141).